Reading from the N-terminus, the 507-residue chain is MVTIRADEISNIIRERIEQYNREVKIVNTGTVLQVGDGIARIYGLDEVMAGELVEFEEGTIGIALNLESNNVGVVLMGDGLMIQEGSSVKATGRIAQIPVSEAYLGRVINALAKPIDGRGEISASESRLIESPAPGIISRRSVYEPLQTGLIAIDSMIPIGRGQRELIIGDRQTGKTAVATDTILNQQGQNVICVYVAIGQKASSVAQVVTTLQERGAMEYTIVVAETADSPATLQYLAPYTGAALAEYFMYRERHTLIIYDDLSKQAQAYRQMSLLLRRPPGREAYPGDVFYLHSRLLERAAKLSSRLGEGSMTALPIVETQSGDVSAYIPTNVISITDGQIFLSADLFNAGIRPAINVGISVSRVGSAAQIKAMKQVAGKLKLELAQFVELEAFAQFASDLDKATQNQLARGQRLRELLKQSQSAPLTVEEQIMTIYTGTNGYLDSLEIGQVRKFLVELRTYLKTNKPQFQEIISSTKTFTEEAETLLKEAIQEQKERFVIQEQV.

170-177 serves as a coordination point for ATP; it reads GDRQTGKT.

The protein belongs to the ATPase alpha/beta chains family. As to quaternary structure, F-type ATPases have 2 components, CF(1) - the catalytic core - and CF(0) - the membrane proton channel. CF(1) has five subunits: alpha(3), beta(3), gamma(1), delta(1), epsilon(1). CF(0) has four main subunits: a, b, b' and c.

It is found in the plastid. It localises to the chloroplast thylakoid membrane. The catalysed reaction is ATP + H2O + 4 H(+)(in) = ADP + phosphate + 5 H(+)(out). Produces ATP from ADP in the presence of a proton gradient across the membrane. The alpha chain is a regulatory subunit. The sequence is that of ATP synthase subunit alpha, chloroplastic from Manihot esculenta (Cassava).